A 300-amino-acid chain; its full sequence is ESX-5 secretion-associated protein EspG5 (300 aa).

The protein belongs to the EspG family. Interacts specifically with ESX-5-dependent PE/PPE proteins. Forms a 1:1:1 heterotrimeric complex with the PE25/PPE41 dimer, via PPE41. Binding of EspG5 does not cause conformational changes in the PE25/PPE41 dimer. Forms a 1:1:1 heterotrimeric complex with the PE8/PPE15 dimer, via PPE15.

The protein localises to the cytoplasm. Its function is as follows. Specific chaperone for cognate PE/PPE proteins. Plays an important role in preventing aggregation of PE/PPE dimers. The chain is ESX-5 secretion-associated protein EspG5 from Mycobacterium tuberculosis (strain ATCC 25618 / H37Rv).